The primary structure comprises 320 residues: Na(+)-translocating NADH-quinone reductase subunit C (320 aa).

The helical transmembrane segment at 16–36 (WYIVSFILGLSLFAGVLLSTI) threads the bilayer. Thr-285 carries the post-translational modification FMN phosphoryl threonine.

It belongs to the NqrC family. Composed of six subunits; NqrA, NqrB, NqrC, NqrD, NqrE and NqrF. FMN serves as cofactor.

The protein resides in the cell inner membrane. The enzyme catalyses a ubiquinone + n Na(+)(in) + NADH + H(+) = a ubiquinol + n Na(+)(out) + NAD(+). Its function is as follows. NQR complex catalyzes the reduction of ubiquinone-1 to ubiquinol by two successive reactions, coupled with the transport of Na(+) ions from the cytoplasm to the periplasm. NqrA to NqrE are probably involved in the second step, the conversion of ubisemiquinone to ubiquinol. In Chlamydia pneumoniae (Chlamydophila pneumoniae), this protein is Na(+)-translocating NADH-quinone reductase subunit C.